Here is a 738-residue protein sequence, read N- to C-terminus: Ethylene receptor (738 aa).

The next 3 helical transmembrane spans lie at 23-43 (ISDFFIALAYFSIPLELIYFV), 54-74 (VLVQFGAFIVLCGATHLINLW), and 92-112 (VLTAVVSCATALMLVHIIPDL). Residues Cys-65 and His-69 each coordinate Cu cation. A GAF domain is found at 158 to 307 (DRHTILKTTL…VVADQVAVAL (150 aa)). The 240-residue stretch at 350–589 (VMNHEMRTPM…IFIVKLGFAE (240 aa)) folds into the Histidine kinase domain. His-353 bears the Phosphohistidine; by autocatalysis mark. Residues 612 to 729 (PGLKVLVMDD…KMRSVLSELL (118 aa)) form the Response regulatory domain. Asp-660 carries the post-translational modification 4-aspartylphosphate.

Belongs to the ethylene receptor family. In terms of assembly, homodimer; disulfide-linked. The cofactor is Cu cation. Post-translationally, activation probably requires a transfer of a phosphate group between a His in the transmitter domain and an Asp of the receiver domain.

Its subcellular location is the endoplasmic reticulum membrane. The catalysed reaction is ATP + protein L-histidine = ADP + protein N-phospho-L-histidine.. May act early in the ethylene signal transduction pathway, possibly as an ethylene receptor, or as a regulator of the pathway. The protein is Ethylene receptor (ETR1) of Prunus persica (Peach).